The following is a 648-amino-acid chain: Transcription initiation factor TFIID subunit 5 (648 aa).

A compositionally biased stretch (low complexity) spans 1–13 (MDSENSSSHSISS). Residues 1-21 (MDSENSSSHSISSPQMFQNTH) form a disordered region. The LisH domain occupies 35-67 (MNNESLQMIIGYLRRNGLTETEELLTREAGPVL). WD repeat units lie at residues 317 to 358 (NAPI…KKLR), 392 to 431 (GHGGPVFSVNFSPDRRLLISSAGDRTVRLWSMETQRNAVI), 433 to 472 (RTPAVVWQAQFCSRGYYFATASADKTAAMWSTDRMHPLRI), 475 to 514 (DPYGDVGCIDYHPNCNYIAGGSDDRYVRVWDVCSGTRVRI), 517 to 556 (GHKASIIAVKFSPCGRYIVSLDAIGNLMIWDLAYQRLVAA), and 560 to 599 (EQAGTKGSITFSRDGGVFAVSHGNSSIQLYSLDTLIGTVL).

The protein belongs to the WD repeat TAF5 family. In terms of assembly, component of the TFIID basal transcription factor complex, composed of TATA-box-binding protein tbp-1, and a number of TBP-associated factors (TAFs).

It localises to the nucleus. Functionally, the TFIID basal transcription factor complex plays a major role in the initiation of RNA polymerase II (Pol II)-dependent transcription. TFIID recognizes and binds promoters via its subunit tbp-1, a TATA-box-binding protein, and promotes assembly of the pre-initiation complex (PIC). The TFIID complex consists of tbp-1 and TBP-associated factors (TAFs), including taf-5. Essential for early embryonic development, but not required for transcription of some genes; probably acts via activating transcription initiation by RNA Pol II, as part of the TFIID complex. This chain is Transcription initiation factor TFIID subunit 5, found in Caenorhabditis elegans.